The sequence spans 474 residues: Carbohydrate sulfotransferase 3 (474 aa).

Residues 1–19 (MEKGLALPQDCRDLVHNLK) lie on the Cytoplasmic side of the membrane. Residues 20-38 (IRGRYVLFLAFVVIVFIFI) traverse the membrane as a helical; Signal-anchor for type II membrane protein segment. The Lumenal portion of the chain corresponds to 39–474 (EKENKIISRV…LEERGTFWVT (436 aa)). N-linked (GlcNAc...) asparagine glycans are attached at residues Asn-63, Asn-74, and Asn-96. Residue 137–143 (TRTGSSF) participates in 3'-phosphoadenylyl sulfate binding. N-linked (GlcNAc...) asparagine glycosylation occurs at Asn-252. 297–305 (RDPRAVLAS) is a binding site for 3'-phosphoadenylyl sulfate. Residues Asn-415 and Asn-459 are each glycosylated (N-linked (GlcNAc...) asparagine).

This sequence belongs to the sulfotransferase 1 family. Gal/GlcNAc/GalNAc subfamily. N-glycosylated.

It is found in the golgi apparatus membrane. It carries out the reaction chondroitin beta-D-glucuronate + n 3'-phosphoadenylyl sulfate = chondroitin 6'-sulfate + n adenosine 3',5'-bisphosphate + n H(+). The enzyme catalyses 3'-phosphoadenylyl sulfate + keratan = adenosine 3',5'-bisphosphate + keratan 6'-sulfate.. Sulfotransferase that utilizes 3'-phospho-5'-adenylyl sulfate (PAPS) as sulfonate donor to catalyze the transfer of sulfate to position 6 of the N-acetylgalactosamine (GalNAc) residue of chondroitin. Chondroitin sulfate constitutes the predominant proteoglycan present in cartilage and is distributed on the surfaces of many cells and extracellular matrices. Catalyzes with a lower efficiency the sulfation of Gal residues of keratan sulfate, another glycosaminoglycan. Can also catalyze the sulfation of the Gal residues in sialyl N-acetyllactosamine (sialyl LacNAc) oligosaccharides. May play a role in the maintenance of naive T-lymphocytes in the spleen. This Rattus norvegicus (Rat) protein is Carbohydrate sulfotransferase 3 (Chst3).